A 1328-amino-acid polypeptide reads, in one-letter code: Protein turtle homolog B (1328 aa).

The N-terminal stretch at 1–17 (MIWYVATLIASVISTRG) is a signal peptide. At 18-722 (LVAQGAHGLR…DLTDDGLARP (705 aa)) the chain is on the extracellular side. Ig-like domains follow at residues 30-115 (PEFV…ECKV), 139-226 (PTFT…LLVQ), 228-320 (PPFI…AYLT), 324-415 (PARV…ARLV), and 420-504 (PYFT…THLT). Intrachain disulfides connect C45/C113 and C161/C208. 2 N-linked (GlcNAc...) asparagine glycosylation sites follow: N241 and N258. Intrachain disulfides connect C250–C303, C346–C397, and C442–C488. 2 consecutive Fibronectin type-III domains span residues 512-604 (APGS…TLAF) and 614-708 (LVTP…STDI). Residue N624 is glycosylated (N-linked (GlcNAc...) asparagine). A helical transmembrane segment spans residues 723–743 (VLAGIVATICFLAAAILFSTL). The Cytoplasmic portion of the chain corresponds to 744 to 1328 (AACFVNKQRK…EPPTTLPTSG (585 aa)). 3 disordered regions span residues 758–817 (RKKD…EKEL), 914–1040 (PMSS…PEPW), and 1106–1328 (KSPG…PTSG). Phosphoserine occurs at positions 775, 783, and 794. Residues 990–1001 (SPLSSVMSSPPL) show a composition bias toward low complexity. Polar residues-rich tracts occupy residues 1018 to 1033 (ENAS…TPTG), 1129 to 1141 (LVSQ…TSQG), and 1199 to 1214 (SRLS…SRTG). R1136 carries the post-translational modification Omega-N-methylarginine. A phosphoserine mark is found at S1207 and S1215. The span at 1246–1273 (SFSRKSTPSSTGSPSQSSRSGSPSYRPT) shows a compositional bias: low complexity. 2 stretches are compositionally biased toward pro residues: residues 1284-1295 (PSPPPGPAPPAP) and 1318-1328 (PEPPTTLPTSG).

The protein belongs to the immunoglobulin superfamily. Turtle family. Found in a complex with MAGI2 and NLGN2, where it interacts with MAGI2 (via PDZ 5 and PDZ 6 domains). Post-translationally, N-glycosylated and sialylated. Not significantly O-glycosylated. In terms of tissue distribution, detected in brain.

It localises to the cell membrane. It is found in the postsynaptic cell membrane. Its subcellular location is the postsynaptic density. In terms of biological role, transmembrane protein which is abundantly expressed in interneurons, where it may regulate inhibitory synapse development. May mediate homophilic cell adhesion. This chain is Protein turtle homolog B, found in Mus musculus (Mouse).